The primary structure comprises 667 residues: High affinity sulfate transporter 1 (667 aa).

A disordered region spans residues 16-38 (ETRSNSSSHRHGGGGGGDDTTSL). Helical transmembrane passes span 106 to 126 (GDFI…LAYA), 131 to 151 (LDPW…AFMG), 156 to 176 (IAIG…SNEI), 185 to 205 (LRLA…LGVC), 208 to 228 (GFLI…GAAI), 269 to 289 (WETI…KYIA), 296 to 316 (FWVS…FVYI), 350 to 370 (GAGV…AIAI), 425 to 445 (VSNI…TPLF), 452 to 472 (VLAS…AMVL), and 486 to 506 (GAFF…AVAI). An STAS domain is found at 537–660 (QYPKAAQIPG…LTVADAVATY (124 aa)).

Belongs to the SLC26A/SulP transporter (TC 2.A.53) family.

Its subcellular location is the membrane. Its function is as follows. High-affinity H(+)/sulfate cotransporter that mediates the uptake of sulfate by plant roots from low concentrations of sulfate in the soil solution. The polypeptide is High affinity sulfate transporter 1 (ST1) (Stylosanthes hamata (Caribbean stylo)).